Here is a 349-residue protein sequence, read N- to C-terminus: DNA integrity scanning protein DisA (349 aa).

The DAC domain maps to 3 to 143 (KQDLMDIIVK…LKYRLKNFDE (141 aa)). Residues Gly-70, Val-88, and 101–105 (TRHRT) contribute to the ATP site.

This sequence belongs to the DisA family. In terms of assembly, homooctamer. The cofactor is Mg(2+).

The catalysed reaction is 2 ATP = 3',3'-c-di-AMP + 2 diphosphate. Participates in a DNA-damage check-point. DisA forms globular foci that rapidly scan along the chromosomes searching for lesions. In terms of biological role, also has diadenylate cyclase activity, catalyzing the condensation of 2 ATP molecules into cyclic di-AMP (c-di-AMP). c-di-AMP likely acts as a signaling molecule that may couple DNA integrity with a cellular process. The sequence is that of DNA integrity scanning protein DisA from Fusobacterium nucleatum subsp. nucleatum (strain ATCC 25586 / DSM 15643 / BCRC 10681 / CIP 101130 / JCM 8532 / KCTC 2640 / LMG 13131 / VPI 4355).